The primary structure comprises 173 residues: MLKSEKEEMIKELHEKFSRTTSAVVAEFTKVDVETVTKLRKKFREGNVEYKVIKNTLARRAAQGTSVSVIADDFTGPVALCISYGDVVAPAKILVEFAKDIEDKIKIRTAVVEGRKVDVAGVKALAKLPGLPELRAQLLGVISEPASKLVRTIAAPGSQLARVVQANADKAQG.

The protein belongs to the universal ribosomal protein uL10 family. Part of the ribosomal stalk of the 50S ribosomal subunit. The N-terminus interacts with L11 and the large rRNA to form the base of the stalk. The C-terminus forms an elongated spine to which L12 dimers bind in a sequential fashion forming a multimeric L10(L12)X complex.

Forms part of the ribosomal stalk, playing a central role in the interaction of the ribosome with GTP-bound translation factors. This is Large ribosomal subunit protein uL10 from Myxococcus xanthus (strain DK1622).